The primary structure comprises 122 residues: Large ribosomal subunit protein uL14 (122 aa).

This sequence belongs to the universal ribosomal protein uL14 family. In terms of assembly, part of the 50S ribosomal subunit. Forms a cluster with proteins L3 and L19. In the 70S ribosome, L14 and L19 interact and together make contacts with the 16S rRNA in bridges B5 and B8.

Its function is as follows. Binds to 23S rRNA. Forms part of two intersubunit bridges in the 70S ribosome. The polypeptide is Large ribosomal subunit protein uL14 (Campylobacter lari (strain RM2100 / D67 / ATCC BAA-1060)).